We begin with the raw amino-acid sequence, 309 residues long: Taste receptor type 2 member 8 (309 aa).

The Extracellular portion of the chain corresponds to 1–7 (MFSPADN). A helical transmembrane segment spans residues 8 to 28 (IFIILITGEFIIGILGNGYIG). Topologically, residues 29 to 50 (LVNWIDWIKKKKISTIDCILTN) are cytoplasmic. The helical transmembrane segment at 51–71 (LVISRICLISVMVVNGIVIVL) threads the bilayer. Residues 72 to 82 (YPDVYTKTKLQ) lie on the Extracellular side of the membrane. Residues 83 to 103 (IVICTFWTFANYLNMWFTACL) form a helical membrane-spanning segment. Over 104-131 (NVFYSLKVANSSHPLFLWLKRKIDMVVR) the chain is Cytoplasmic. A helical transmembrane segment spans residues 132–152 (WILLGCFAISLLVSLIIATVL). Over 153-184 (SHDYRFHAIAKHKRNVTEMFHVSKMPYFEPLT) the chain is Extracellular. N-linked (GlcNAc...) asparagine glycosylation is present at asparagine 167. The chain crosses the membrane as a helical span at residues 185–205 (LFNLLAIVPFIVSLMSFFLLV). The Cytoplasmic portion of the chain corresponds to 206–239 (RSLWRHTKQIKLYATGGRDPSTEAHVRAIKTMTL). The chain crosses the membrane as a helical span at residues 240–260 (LIFFFFLYYITSLLVXFSYLI). The Extracellular segment spans residues 261-266 (TNYKLA). A helical membrane pass occupies residues 267–287 (MAFGEIVAILYPSGHSLILII). The Cytoplasmic segment spans residues 288–309 (LNNKLRQASVRMLTCRKIACVT).

The protein belongs to the G-protein coupled receptor T2R family.

It is found in the membrane. Its function is as follows. Receptor that may play a role in the perception of bitterness and is gustducin-linked. May play a role in sensing the chemical composition of the gastrointestinal content. The activity of this receptor may stimulate alpha gustducin, mediate PLC-beta-2 activation and lead to the gating of TRPM5. The polypeptide is Taste receptor type 2 member 8 (TAS2R8) (Papio hamadryas (Hamadryas baboon)).